Consider the following 424-residue polypeptide: Histidine--tRNA ligase (424 aa).

The segment at 1–22 is disordered; the sequence is MSYRRPKGTYDVYPGDAARQEP.

The protein belongs to the class-II aminoacyl-tRNA synthetase family. As to quaternary structure, homodimer.

Its subcellular location is the cytoplasm. The catalysed reaction is tRNA(His) + L-histidine + ATP = L-histidyl-tRNA(His) + AMP + diphosphate + H(+). This Rubrobacter xylanophilus (strain DSM 9941 / JCM 11954 / NBRC 16129 / PRD-1) protein is Histidine--tRNA ligase.